The chain runs to 260 residues: 3'-5' ssDNA/RNA exonuclease TatD (260 aa).

Residues glutamate 91, histidine 127, and histidine 152 each contribute to the a divalent metal cation site.

It belongs to the metallo-dependent hydrolases superfamily. TatD-type hydrolase family. TatD subfamily. Monomer. Mg(2+) is required as a cofactor. Mn(2+) serves as cofactor.

The protein resides in the cytoplasm. Functionally, 3'-5' exonuclease that prefers single-stranded DNA and RNA. May play a role in the H(2)O(2)-induced DNA damage repair. The polypeptide is 3'-5' ssDNA/RNA exonuclease TatD (Escherichia coli (strain K12)).